The following is a 367-amino-acid chain: tRNA (guanine(26)-N(2))-dimethyltransferase (367 aa).

A Trm1 methyltransferase domain is found at 1-365; that stretch reads MRVSEGRVTV…ADVVEIREAT (365 aa). 5 residues coordinate S-adenosyl-L-methionine: arginine 34, arginine 64, aspartate 79, aspartate 105, and alanine 106. Zn(2+) is bound by residues cysteine 234, cysteine 237, cysteine 254, and cysteine 257.

This sequence belongs to the class I-like SAM-binding methyltransferase superfamily. Trm1 family.

The catalysed reaction is guanosine(26) in tRNA + 2 S-adenosyl-L-methionine = N(2)-dimethylguanosine(26) in tRNA + 2 S-adenosyl-L-homocysteine + 2 H(+). Functionally, dimethylates a single guanine residue at position 26 of a number of tRNAs using S-adenosyl-L-methionine as donor of the methyl groups. This chain is tRNA (guanine(26)-N(2))-dimethyltransferase, found in Haloarcula marismortui (strain ATCC 43049 / DSM 3752 / JCM 8966 / VKM B-1809) (Halobacterium marismortui).